Reading from the N-terminus, the 426-residue chain is Bile acid CoA-transferase BaiF (426 aa).

Aspartate 168 acts as the Nucleophile in catalysis.

The protein belongs to the CoA-transferase III family.

It catalyses the reaction lithocholoyl-CoA + cholate = choloyl-CoA + lithocholate. The catalysed reaction is deoxycholoyl-CoA + cholate = choloyl-CoA + deoxycholate. The enzyme catalyses allodeoxycholoyl-CoA + cholate = allodeoxycholate + choloyl-CoA. It carries out the reaction allocholate + deoxycholoyl-CoA = allocholoyl-CoA + deoxycholate. It catalyses the reaction allocholate + lithocholoyl-CoA = allocholoyl-CoA + lithocholate. The catalysed reaction is allocholate + allodeoxycholoyl-CoA = allocholoyl-CoA + allodeoxycholate. The enzyme catalyses lithocholoyl-CoA + chenodeoxycholate = chenodeoxycholoyl-CoA + lithocholate. It carries out the reaction ursodeoxycholate + deoxycholoyl-CoA = ursodeoxycholoyl-CoA + deoxycholate. It catalyses the reaction ursodeoxycholate + lithocholoyl-CoA = ursodeoxycholoyl-CoA + lithocholate. The catalysed reaction is allodeoxycholoyl-CoA + ursodeoxycholate = ursodeoxycholoyl-CoA + allodeoxycholate. The enzyme catalyses beta-muricholate + lithocholoyl-CoA = beta-muricholoyl-CoA + lithocholate. It carries out the reaction beta-muricholate + deoxycholoyl-CoA = beta-muricholoyl-CoA + deoxycholate. It catalyses the reaction beta-muricholate + allodeoxycholoyl-CoA = beta-muricholoyl-CoA + allodeoxycholate. The catalysed reaction is choloyl-CoA + H2O = cholate + CoA + H(+). The enzyme catalyses chenodeoxycholoyl-CoA + H2O = chenodeoxycholate + CoA + H(+). It functions in the pathway lipid metabolism; bile acid biosynthesis. Functionally, functions in the bile acid 7alpha-dehydroxylation pathway, which forms secondary bile acids via the 7alpha-dehydroxylation of primary bile acids, and is carried out by intestinal anaerobic bacteria. Acts as a bile acid CoA transferase with broad bile acid substrate specificity. Catalyzes the transfer of the CoA moiety of secondary bile acid-CoA compounds to primary bile acids. Can use lithocholoyl-CoA, deoxycholoyl-CoA and allodeoxycholoyl-CoA as bile acid CoA donors and cholate, allocholate, chenodeoxycholate, ursodeoxycholate, and beta-muricholate as bile acid CoA acceptors. Also displays CoA hydrolase activity, being able to catalyze the hydrolysis of choloyl-CoA, 3-dehydrocholoyl-CoA, and chenodeoxycholoyl-CoA, releasing CoA and the corresponding free bile acid. However, this latter activity may not represent the actual activity of this enzyme, since using a transferase rather than hydrolase, the bacteria conserve the thioester bond energy, saving ATP molecules. Shows no hydrolytic activity with acetyl-CoA, isovaleryl-CoA, palmitoyl-CoA, or phenylacetyl-CoA as substrates. This is Bile acid CoA-transferase BaiF from Clostridium scindens (strain JCM 10418 / VPI 12708).